Reading from the N-terminus, the 309-residue chain is S-antigen protein (309 aa).

The N-terminal stretch at 1 to 23 (MNRILSVSFYLFFLYLYIYKTYG) is a signal peptide. A disordered region spans residues 52-309 (GKGNKYEDLQ…KSIMNMLILM (258 aa)). A compositionally biased stretch (acidic residues) spans 60–86 (LQEEGEGENDDEEHSNSEESDNDEENE). Basic and acidic residues predominate over residues 93–259 (EAPKSDEAEA…DEAEARKSEA (167 aa)). Residues 97-256 (SDEAEALKSD…RKSDEAEARK (160 aa)) form a 20 X 8 AA approximate tandem repeats of A-[RL]-K-S-D-E-A-E region. Tandem repeats lie at residues 257–271 (SEAG…GGPG) and 272–286 (SEAG…GGPG). The 2 X 15 AA tandem repeats of S-E-A-G-T-E-G-P-K-G-T-G-G-P-G stretch occupies residues 257–286 (SEAGTEGPKGTGGPGSEAGTEGPKGTGGPG). Residues 263–289 (GPKGTGGPGSEAGTEGPKGTGGPGSGG) are compositionally biased toward gly residues.

It is found in the parasitophorous vacuole. S antigens are soluble heat-stable proteins present in the sera of some infected individuals. The chain is S-antigen protein from Plasmodium falciparum (isolate NF7 / Ghana).